A 287-amino-acid polypeptide reads, in one-letter code: Spermidine/putrescine transport system permease protein PotB (287 aa).

The Cytoplasmic segment spans residues Met1–Val10. A helical transmembrane segment spans residues Val11–Ile31. The Periplasmic portion of the chain corresponds to Gly32 to Asn70. The ABC transmembrane type-1 domain occupies Leu65–Tyr271. The helical transmembrane segment at Met71–Ala91 threads the bilayer. At Lys92–Pro99 the chain is on the cytoplasmic side. The chain crosses the membrane as a helical span at residues Leu100 to Leu120. Residues Lys121 to Arg145 are Periplasmic-facing. The chain crosses the membrane as a helical span at residues Ile146–Val166. Residues Met167–Arg197 are Cytoplasmic-facing. The helical transmembrane segment at Ile198 to Ala218 threads the bilayer. At Met219 to Pro251 the chain is on the periplasmic side. The chain crosses the membrane as a helical span at residues Phe252–Trp272. Residues Arg273 to Asp287 lie on the Cytoplasmic side of the membrane.

The protein belongs to the binding-protein-dependent transport system permease family. CysTW subfamily.

The protein resides in the cell inner membrane. Functionally, required for the activity of the bacterial periplasmic transport system of putrescine and spermidine. The protein is Spermidine/putrescine transport system permease protein PotB (potB) of Salmonella typhi.